The sequence spans 3003 residues: MAX gene-associated protein (3003 aa).

Glycyl lysine isopeptide (Lys-Gly) (interchain with G-Cter in SUMO2) cross-links involve residues Lys-4 and Lys-178. The T-box DNA-binding region spans 84–260 (MWNEFHNRST…YNPFAKGFRD (177 aa)). The segment covering 259 to 277 (RDDGLSSKPQREGKQRNSS) has biased composition (basic and acidic residues). The disordered stretch occupies residues 259 to 290 (RDDGLSSKPQREGKQRNSSDQEGNSVSSSPAH). Over residues 278-288 (DQEGNSVSSSP) the composition is skewed to polar residues. Residues Lys-323, Lys-329, Lys-348, Lys-431, Lys-458, Lys-463, and Lys-480 each participate in a glycyl lysine isopeptide (Lys-Gly) (interchain with G-Cter in SUMO2) cross-link. A Phosphoserine modification is found at Ser-531. The segment at 553–647 (ILDNSSTERI…NIPVGPGSTF (95 aa)) is disordered. Lys-567 participates in a covalent cross-link: Glycyl lysine isopeptide (Lys-Gly) (interchain with G-Cter in SUMO2). A compositionally biased stretch (polar residues) spans 595–607 (KTVTASHSASPNT). Ser-604 is subject to Phosphoserine. Residues Lys-610, Lys-651, Lys-782, Lys-788, Lys-814, and Lys-823 each participate in a glycyl lysine isopeptide (Lys-Gly) (interchain with G-Cter in SUMO2) cross-link. The span at 610 to 621 (KRGRPRKLRLSK) shows a compositional bias: basic residues. Phosphoserine is present on Ser-848. A compositionally biased stretch (polar residues) spans 871–913 (KQSTISPSTSHSVKPQSVTTASRKTKAQNKQTTLSGRTKSSYK). Disordered stretches follow at residues 871 to 946 (KQST…TSDN) and 967 to 987 (LRQAQQQHLQQQGTRPPGLSK). Phosphoserine is present on Ser-921. A Glycyl lysine isopeptide (Lys-Gly) (interchain with G-Cter in SUMO2) cross-link involves residue Lys-925. Over residues 937 to 946 (KNSLSSTSDN) the composition is skewed to polar residues. Residues 969-978 (QAQQQHLQQQ) are compositionally biased toward low complexity. Glycyl lysine isopeptide (Lys-Gly) (interchain with G-Cter in SUMO2) cross-links involve residues Lys-987 and Lys-1088. The tract at residues 1111 to 1130 (LGEEGREGGGVREDEEQLKE) is disordered. The span at 1113–1122 (EEGREGGGVR) shows a compositional bias: basic and acidic residues. Glycyl lysine isopeptide (Lys-Gly) (interchain with G-Cter in SUMO2) cross-links involve residues Lys-1136, Lys-1158, Lys-1194, and Lys-1202. 4 disordered regions span residues 1186–1215 (QPDLSSTTKGKLTPGIKPARTYTPKPNPVI), 1246–1277 (QRQLSPPLSPSSSFQQQSSCYSSPENRVTKEL), 1297–1323 (SQEKSWKSSCNEGESSSTSYVHQRSPG), and 1376–1424 (RGEK…DISP). Low complexity-rich tracts occupy residues 1248 to 1269 (QLSPPLSPSSSFQQQSSCYSSP) and 1303 to 1315 (KSSCNEGESSSTS). Phosphoserine occurs at positions 1423 and 1450. Residues Lys-1454 and Lys-1495 each participate in a glycyl lysine isopeptide (Lys-Gly) (interchain with G-Cter in SUMO2) cross-link. Disordered regions lie at residues 1476-1508 (AKVAASRKPRTLLPSTSNSKMASSGPATNRSGK), 1722-1746 (PPVSQRPENAPQIPVTTPQISSNNV), 1856-1885 (ISPPETQNLASKTGSESKITPSTGGQPVGT), 1920-1954 (IKKESQSTDQKDETNSIKREEETKKALPSKDKALD), 1964-1983 (SGIIASENTSNNSLDDGGDL), and 1988-2038 (TLRE…AGSK). Composition is skewed to polar residues over residues 1488–1507 (LPSTSNSKMASSGPATNRSG), 1735–1746 (PVTTPQISSNNV), and 1859–1880 (PETQNLASKTGSESKITPSTGG). Residues Lys-1937 and Lys-1944 each participate in a glycyl lysine isopeptide (Lys-Gly) (interchain with G-Cter in SUMO2) cross-link. The segment covering 1964-1976 (SGIIASENTSNNS) has biased composition (polar residues). Residues Lys-2060 and Lys-2084 each participate in a glycyl lysine isopeptide (Lys-Gly) (interchain with G-Cter in SUMO2) cross-link. Residues 2087-2110 (LSGNQVKEQQSNSQAEAKKDCEDS) form a disordered region. Over residues 2088-2101 (SGNQVKEQQSNSQA) the composition is skewed to polar residues. Glycyl lysine isopeptide (Lys-Gly) (interchain with G-Cter in SUMO2) cross-links involve residues Lys-2104, Lys-2152, and Lys-2179. Arg-2206 carries the omega-N-methylarginine modification. The interval 2207 to 2255 (GSRHFQGHLLLPREQMKPKQQTKDGRSSAADFTVLDLEDEDEEDEKTDD) is disordered. Residues 2220-2232 (EQMKPKQQTKDGR) are compositionally biased toward basic and acidic residues. Lys-2225 is covalently cross-linked (Glycyl lysine isopeptide (Lys-Gly) (interchain with G-Cter in SUMO2)). Residues 2242–2255 (DLEDEDEEDEKTDD) show a composition bias toward acidic residues. Glycyl lysine isopeptide (Lys-Gly) (interchain with G-Cter in SUMO2) cross-links involve residues Lys-2317, Lys-2352, Lys-2396, and Lys-2471. Residues 2362–2413 (YYRRTHTANERRRRGEMRDLFEKLKITLGLLHSSKVSKSLILNRAFSEIQGL) enclose the bHLH domain. A Phosphoserine modification is found at Ser-2480. The tract at residues 2515–2534 (KRDQATENASPSDTPHSSAN) is disordered. Residues 2520 to 2534 (TENASPSDTPHSSAN) are compositionally biased toward polar residues. Glycyl lysine isopeptide (Lys-Gly) (interchain with G-Cter in SUMO2) cross-links involve residues Lys-2568 and Lys-2618. A compositionally biased stretch (basic and acidic residues) spans 2629-2651 (SEASSLKDTERISSRGNHRDSRK). The interval 2629–2654 (SEASSLKDTERISSRGNHRDSRKALG) is disordered. Lys-2724 is covalently cross-linked (Glycyl lysine isopeptide (Lys-Gly) (interchain with G-Cter in SUMO2)). Phosphoserine is present on residues Ser-2849 and Ser-2860. The interval 2877–2917 (LVSHRKSSDGGQSTSGLPAEPESVSSPPILHMKTGPENSNT) is disordered. Lys-2979 is covalently cross-linked (Glycyl lysine isopeptide (Lys-Gly) (interchain with G-Cter in SUMO2)).

Component of some MLL1/MLL complex, at least composed of the core components KMT2A/MLL1, ASH2L, HCFC1/HCF1, WDR5 and RBBP5, as well as the facultative components BACC1, CHD8, E2F6, HSP70, INO80C, KANSL1, LAS1L, MAX, MCRS1, MGA, MYST1/MOF, PELP1, PHF20, PRP31, RING2, RUVB1/TIP49A, RUVB2/TIP49B, SENP3, TAF1, TAF4, TAF6, TAF7, TAF9 and TEX10. Interacts with ZMYND11. Interacts with MAX. Requires heterodimerization with MAX for E-box binding. In terms of tissue distribution, highly expressed in germ cells and granulosa cells.

The protein resides in the nucleus. Functions as a dual-specificity transcription factor, regulating the expression of both MAX-network and T-box family target genes. Functions as a repressor or an activator. Binds to 5'-AATTTCACACCTAGGTGTGAAATT-3' core sequence and seems to regulate MYC-MAX target genes. Suppresses transcriptional activation by MYC and inhibits MYC-dependent cell transformation. Function activated by heterodimerization with MAX. This heterodimerization serves the dual function of both generating an E-box-binding heterodimer and simultaneously blocking interaction of a corepressor. This Mus musculus (Mouse) protein is MAX gene-associated protein.